The sequence spans 163 residues: Inorganic pyrophosphatase (163 aa).

Mg(2+) is bound at residue glutamate 8. Positions 16, 30, and 42 each coordinate substrate. Mg(2+)-binding residues include aspartate 52, aspartate 57, aspartate 84, and aspartate 89. Aspartate 89 serves as the catalytic Proton acceptor. Tyrosine 126 serves as a coordination point for substrate.

This sequence belongs to the PPase family. As to quaternary structure, homohexamer. The cofactor is Mg(2+).

It is found in the cytoplasm. It carries out the reaction diphosphate + H2O = 2 phosphate + H(+). In terms of biological role, catalyzes the hydrolysis of inorganic pyrophosphate (PPi) forming two phosphate ions. This chain is Inorganic pyrophosphatase, found in Streptomyces coelicolor (strain ATCC BAA-471 / A3(2) / M145).